Reading from the N-terminus, the 32-residue chain is Calcitonin (32 aa).

The cysteines at positions 1 and 7 are disulfide-linked. The residue at position 32 (Pro-32) is a Proline amide.

It belongs to the calcitonin family.

The protein resides in the secreted. Functionally, causes a rapid but short-lived drop in the level of calcium and phosphate in blood by promoting the incorporation of those ions in the bones. The sequence is that of Calcitonin from Anguilla japonica (Japanese eel).